A 256-amino-acid chain; its full sequence is Ubiquinone/menaquinone biosynthesis C-methyltransferase UbiE (256 aa).

Residues Thr79, Asp100, and 128–129 (DA) each bind S-adenosyl-L-methionine.

This sequence belongs to the class I-like SAM-binding methyltransferase superfamily. MenG/UbiE family.

The enzyme catalyses a 2-demethylmenaquinol + S-adenosyl-L-methionine = a menaquinol + S-adenosyl-L-homocysteine + H(+). The catalysed reaction is a 2-methoxy-6-(all-trans-polyprenyl)benzene-1,4-diol + S-adenosyl-L-methionine = a 5-methoxy-2-methyl-3-(all-trans-polyprenyl)benzene-1,4-diol + S-adenosyl-L-homocysteine + H(+). It functions in the pathway quinol/quinone metabolism; menaquinone biosynthesis; menaquinol from 1,4-dihydroxy-2-naphthoate: step 2/2. It participates in cofactor biosynthesis; ubiquinone biosynthesis. Functionally, methyltransferase required for the conversion of demethylmenaquinol (DMKH2) to menaquinol (MKH2) and the conversion of 2-polyprenyl-6-methoxy-1,4-benzoquinol (DDMQH2) to 2-polyprenyl-3-methyl-6-methoxy-1,4-benzoquinol (DMQH2). In Pseudomonas savastanoi pv. phaseolicola (strain 1448A / Race 6) (Pseudomonas syringae pv. phaseolicola (strain 1448A / Race 6)), this protein is Ubiquinone/menaquinone biosynthesis C-methyltransferase UbiE.